The sequence spans 256 residues: Hydroxyacylglutathione hydrolase (256 aa).

Histidine 57, histidine 59, aspartate 61, histidine 62, histidine 115, aspartate 134, and histidine 172 together coordinate Zn(2+).

It belongs to the metallo-beta-lactamase superfamily. Glyoxalase II family. As to quaternary structure, monomer. Zn(2+) is required as a cofactor.

It catalyses the reaction an S-(2-hydroxyacyl)glutathione + H2O = a 2-hydroxy carboxylate + glutathione + H(+). Its pathway is secondary metabolite metabolism; methylglyoxal degradation; (R)-lactate from methylglyoxal: step 2/2. Functionally, thiolesterase that catalyzes the hydrolysis of S-D-lactoyl-glutathione to form glutathione and D-lactic acid. The sequence is that of Hydroxyacylglutathione hydrolase from Maricaulis maris (strain MCS10) (Caulobacter maris).